A 332-amino-acid chain; its full sequence is MAAATAAAALAAADPPPAMPQAAGAGGPTTRRDFYWLRSFLAGGIAGCCAKTTVAPLDRVKVLLQAHNHHYKHLGVFSALRAVPQKEGFLGLYKGNGAMMIRIFPYGAIQFMAFEHYKTLITTKLGISGHVHRLMAGSMAGMTAVICTYPLDMVRVRLAFQVKGEHSYTGIIHAFKTIYAKEGGFFGFYRGLMPTILGMAPYAGVSFFTFGTLKSVGLSHAPTLLGRPSSDNPNVLVLKTHVNLLCGGVAGAIAQTISYPFDVTRRRMQLGTVLPEFEKCLTMRDTMKYVYGHHGIRKGLYRGLSLNYIRCIPSQAVAFTTYELMKQFFHLN.

Solcar repeat units follow at residues 34-120 (FYWL…YKTL), 128-216 (SGHV…LKSV), and 238-328 (LKTH…MKQF). A run of 6 helical transmembrane segments spans residues 37–57 (LRSF…VAPL), 88–108 (GFLG…PYGA), 134–154 (LMAG…LDMV), 191–211 (GLMP…FTFG), 244–264 (LLCG…FDVT), and 299–319 (GLYR…AVAF).

The protein belongs to the mitochondrial carrier (TC 2.A.29) family.

It is found in the mitochondrion inner membrane. Functionally, may be involved in the transport of coenzyme A in the mitochondrial matrix. Very little is known about the physiological function of this carrier. The chain is Solute carrier family 25 member 16 from Homo sapiens (Human).